The following is a 575-amino-acid chain: DNA-directed RNA polymerase subunit beta' (575 aa).

Belongs to the RNA polymerase beta' chain family. As to quaternary structure, in plastids the minimal PEP RNA polymerase catalytic core is composed of four subunits: alpha, beta, beta', and beta''. When a (nuclear-encoded) sigma factor is associated with the core the holoenzyme is formed, which can initiate transcription.

It is found in the plastid. Its subcellular location is the apicoplast. The enzyme catalyses RNA(n) + a ribonucleoside 5'-triphosphate = RNA(n+1) + diphosphate. Functionally, DNA-dependent RNA polymerase catalyzes the transcription of DNA into RNA using the four ribonucleoside triphosphates as substrates. The chain is DNA-directed RNA polymerase subunit beta' (rpoC1) from Plasmodium falciparum (isolate 3D7).